We begin with the raw amino-acid sequence, 113 residues long: MPLPSEVEKAARSGSEYELYKALLLSFGKRGDKAFEYLKRSKVKRYKDFFVVVGKEEYVVEGGFCTCPDFLVNLKGKSPCAHIIAVEVAKITGKYDYIDAYYVDYPDILRKKK.

The SWIM-type zinc finger occupies phenylalanine 49–isoleucine 91.

This is an uncharacterized protein from Archaeoglobus fulgidus (strain ATCC 49558 / DSM 4304 / JCM 9628 / NBRC 100126 / VC-16).